Reading from the N-terminus, the 125-residue chain is Small ribosomal subunit protein uS12 (125 aa).

Positions 1–31 are disordered; that stretch reads MPTINQLVRHGRQTEVTKSKSPAMQGGPQRR. Asp89 is modified (3-methylthioaspartic acid). Residues 105–125 are disordered; that stretch reads QGVKDRKQSRSKYGAKRPKKA. Positions 113–125 are enriched in basic residues; sequence SRSKYGAKRPKKA.

It belongs to the universal ribosomal protein uS12 family. In terms of assembly, part of the 30S ribosomal subunit. Contacts proteins S8 and S17. May interact with IF1 in the 30S initiation complex.

Its function is as follows. With S4 and S5 plays an important role in translational accuracy. Interacts with and stabilizes bases of the 16S rRNA that are involved in tRNA selection in the A site and with the mRNA backbone. Located at the interface of the 30S and 50S subunits, it traverses the body of the 30S subunit contacting proteins on the other side and probably holding the rRNA structure together. The combined cluster of proteins S8, S12 and S17 appears to hold together the shoulder and platform of the 30S subunit. This chain is Small ribosomal subunit protein uS12, found in Methylibium petroleiphilum (strain ATCC BAA-1232 / LMG 22953 / PM1).